A 268-amino-acid polypeptide reads, in one-letter code: Tryptophan synthase alpha chain (268 aa).

Residues glutamate 49 and aspartate 60 each act as proton acceptor in the active site.

Belongs to the TrpA family. As to quaternary structure, tetramer of two alpha and two beta chains.

The catalysed reaction is (1S,2R)-1-C-(indol-3-yl)glycerol 3-phosphate + L-serine = D-glyceraldehyde 3-phosphate + L-tryptophan + H2O. Its pathway is amino-acid biosynthesis; L-tryptophan biosynthesis; L-tryptophan from chorismate: step 5/5. Functionally, the alpha subunit is responsible for the aldol cleavage of indoleglycerol phosphate to indole and glyceraldehyde 3-phosphate. The chain is Tryptophan synthase alpha chain from Aliivibrio fischeri (strain ATCC 700601 / ES114) (Vibrio fischeri).